The following is a 386-amino-acid chain: Succinyl-diaminopimelate desuccinylase (386 aa).

H77 is a Zn(2+) binding site. D79 is an active-site residue. D110 contributes to the Zn(2+) binding site. E144 acts as the Proton acceptor in catalysis. Zn(2+) contacts are provided by E145, E173, and H359.

This sequence belongs to the peptidase M20A family. DapE subfamily. In terms of assembly, homodimer. It depends on Zn(2+) as a cofactor. The cofactor is Co(2+).

The catalysed reaction is N-succinyl-(2S,6S)-2,6-diaminopimelate + H2O = (2S,6S)-2,6-diaminopimelate + succinate. It participates in amino-acid biosynthesis; L-lysine biosynthesis via DAP pathway; LL-2,6-diaminopimelate from (S)-tetrahydrodipicolinate (succinylase route): step 3/3. In terms of biological role, catalyzes the hydrolysis of N-succinyl-L,L-diaminopimelic acid (SDAP), forming succinate and LL-2,6-diaminopimelate (DAP), an intermediate involved in the bacterial biosynthesis of lysine and meso-diaminopimelic acid, an essential component of bacterial cell walls. The chain is Succinyl-diaminopimelate desuccinylase from Ralstonia pickettii (strain 12J).